The sequence spans 414 residues: Eukaryotic initiation factor 4A-3 (414 aa).

An N-acetylalanine modification is found at alanine 2. Residues aspartate 41–glutamine 69 carry the Q motif motif. A Helicase ATP-binding domain is found at isoleucine 72–isoleucine 242. Residue alanine 85 to threonine 92 participates in ATP binding. Phosphoserine is present on serine 106. Threonine 147 carries the phosphothreonine modification. The DEAD box signature appears at aspartate 190–aspartate 193. Residues glycine 253–leucine 414 enclose the Helicase C-terminal domain.

This sequence belongs to the DEAD box helicase family. eIF4A subfamily. As to quaternary structure, eIF4F is a multi-subunit complex, the composition of which varies with external and internal environmental conditions. It is composed of at least EIF4A, EIF4E and EIF4G.

It is found in the cytoplasm. It catalyses the reaction ATP + H2O = ADP + phosphate + H(+). Its function is as follows. ATP-dependent RNA helicase which is a subunit of the eIF4F complex involved in cap recognition and is required for mRNA binding to ribosome. In the current model of translation initiation, eIF4A unwinds RNA secondary structures in the 5'-UTR of mRNAs which is necessary to allow efficient binding of the small ribosomal subunit, and subsequent scanning for the initiator codon. The protein is Eukaryotic initiation factor 4A-3 (TIF4A-3) of Arabidopsis thaliana (Mouse-ear cress).